Reading from the N-terminus, the 112-residue chain is UPF0342 protein SSA_1465 (112 aa).

Belongs to the UPF0342 family.

This chain is UPF0342 protein SSA_1465, found in Streptococcus sanguinis (strain SK36).